A 111-amino-acid chain; its full sequence is uncharacterized protein (111 aa).

A helical membrane pass occupies residues 18-41 (FFYFFFISFYTLWIVFFLLHLSFF).

Its subcellular location is the membrane. This is an uncharacterized protein from Saccharomyces cerevisiae (strain ATCC 204508 / S288c) (Baker's yeast).